We begin with the raw amino-acid sequence, 815 residues long: Phenylalanine--tRNA ligase beta subunit (815 aa).

The region spanning 39–153 (ASHAQGVVVG…NVPDLGQPVG (115 aa)) is the tRNA-binding domain. The B5 domain maps to 414 to 498 (KSAEPVKLRR…RLVGFDRFEA (85 aa)). Positions 476, 482, 485, and 486 each coordinate Mg(2+). Residues 721 to 814 (PTVPAMELDL…LVKQFSAELR (94 aa)) form the FDX-ACB domain.

This sequence belongs to the phenylalanyl-tRNA synthetase beta subunit family. Type 1 subfamily. In terms of assembly, tetramer of two alpha and two beta subunits. The cofactor is Mg(2+).

The protein localises to the cytoplasm. It catalyses the reaction tRNA(Phe) + L-phenylalanine + ATP = L-phenylalanyl-tRNA(Phe) + AMP + diphosphate + H(+). The polypeptide is Phenylalanine--tRNA ligase beta subunit (Prochlorococcus marinus (strain MIT 9313)).